A 227-amino-acid polypeptide reads, in one-letter code: YEATS domain-containing protein 4 (227 aa).

Residues 15–158 (RVKGVTIVKP…AMMQQLLTTS (144 aa)) enclose the YEATS domain. A Glycyl lysine isopeptide (Lys-Gly) (interchain with G-Cter in SUMO2) cross-link involves residue lysine 37. A diacetylated histone H3 binding region spans residues 93-97 (WGEFE). The tract at residues 163–227 (LGAYKHETEF…LEEDDQTKDI (65 aa)) is interaction with MLLT10. The tract at residues 168–227 (HETEFAELEVKTREKLEAAKKKTSFEIAELKERLKASRETINCLKNEIRKLEEDDQTKDI) is interaction with TACC1. The stretch at 178 to 226 (KTREKLEAAKKKTSFEIAELKERLKASRETINCLKNEIRKLEEDDQTKD) forms a coiled coil.

Component of numerous complexes with chromatin remodeling and histone acetyltransferase activity. Component of the NuA4 histone acetyltransferase complex which contains the catalytic subunit KAT5/TIP60 and the subunits EP400, TRRAP/PAF400, BRD8/SMAP, EPC1, DMAP1/DNMAP1, RUVBL1/TIP49, RUVBL2, ING3, actin, ACTL6A/BAF53A, MORF4L1/MRG15, MORF4L2/MRGX, MRGBP, YEATS4/GAS41, VPS72/YL1 and MEAF6. The NuA4 complex interacts with MYC and the adenovirus E1A protein. Component of a NuA4-related complex which contains EP400, TRRAP/PAF400, SRCAP, BRD8/SMAP, EPC1, DMAP1/DNMAP1, RUVBL1/TIP49, RUVBL2, actin, ACTL6A/BAF53A, VPS72 and YEATS4/GAS41. Interacts with MLLT10/AF10. Also interacts with the SWI/SNF component SMARCB1/BAF47, TACC1 and TACC2, and the nuclear matrix protein NUMA1.

It localises to the nucleus. In terms of biological role, chromatin reader component of the NuA4 histone acetyltransferase (HAT) complex, a complex involved in transcriptional activation of select genes principally by acetylation of nucleosomal histones H4 and H2A. Specifically recognizes and binds acylated histone H3, with a preference for histone H3 diacetylated at 'Lys-18' and 'Lys-27' (H3K18ac and H3K27ac) or histone H3 diacetylated at 'Lys-14' and 'Lys-27' (H3K14ac and H3K27ac). Also able to recognize and bind crotonylated histone H3. May also recognize and bind histone H3 succinylated at 'Lys-122' (H3K122succ); additional evidences are however required to confirm this result in vivo. Plays a key role in histone variant H2AZ1/H2A.Z deposition into specific chromatin regions: recognizes and binds H3K14ac and H3K27ac on the promoters of actively transcribed genes and recruits NuA4-related complex to deposit H2AZ1/H2A.Z. H2AZ1/H2A.Z deposition is required for maintenance of embryonic stem cell. The sequence is that of YEATS domain-containing protein 4 from Mus musculus (Mouse).